A 319-amino-acid polypeptide reads, in one-letter code: tRNA (guanine-N(7)-)-methyltransferase (319 aa).

Glu-28, Glu-51, and Asp-75 together coordinate S-adenosyl-L-methionine. Substrate contacts are provided by residues Asp-134 and 167–170 (TKYE).

It belongs to the class I-like SAM-binding methyltransferase superfamily. TrmB family.

The enzyme catalyses guanosine(46) in tRNA + S-adenosyl-L-methionine = N(7)-methylguanosine(46) in tRNA + S-adenosyl-L-homocysteine. The protein operates within tRNA modification; N(7)-methylguanine-tRNA biosynthesis. In terms of biological role, catalyzes the formation of N(7)-methylguanine at position 46 (m7G46) in tRNA. The polypeptide is tRNA (guanine-N(7)-)-methyltransferase (Coprothermobacter proteolyticus (strain ATCC 35245 / DSM 5265 / OCM 4 / BT)).